Here is a 168-residue protein sequence, read N- to C-terminus: Crossover junction endodeoxyribonuclease RuvC (168 aa).

Residues aspartate 11, glutamate 71, and aspartate 144 contribute to the active site. Positions 11, 71, and 144 each coordinate Mg(2+).

The protein belongs to the RuvC family. In terms of assembly, homodimer which binds Holliday junction (HJ) DNA. The HJ becomes 2-fold symmetrical on binding to RuvC with unstacked arms; it has a different conformation from HJ DNA in complex with RuvA. In the full resolvosome a probable DNA-RuvA(4)-RuvB(12)-RuvC(2) complex forms which resolves the HJ. The cofactor is Mg(2+).

Its subcellular location is the cytoplasm. The catalysed reaction is Endonucleolytic cleavage at a junction such as a reciprocal single-stranded crossover between two homologous DNA duplexes (Holliday junction).. Its function is as follows. The RuvA-RuvB-RuvC complex processes Holliday junction (HJ) DNA during genetic recombination and DNA repair. Endonuclease that resolves HJ intermediates. Cleaves cruciform DNA by making single-stranded nicks across the HJ at symmetrical positions within the homologous arms, yielding a 5'-phosphate and a 3'-hydroxyl group; requires a central core of homology in the junction. The consensus cleavage sequence is 5'-(A/T)TT(C/G)-3'. Cleavage occurs on the 3'-side of the TT dinucleotide at the point of strand exchange. HJ branch migration catalyzed by RuvA-RuvB allows RuvC to scan DNA until it finds its consensus sequence, where it cleaves and resolves the cruciform DNA. The sequence is that of Crossover junction endodeoxyribonuclease RuvC from Protochlamydia amoebophila (strain UWE25).